A 383-amino-acid polypeptide reads, in one-letter code: Acetylornithine deacetylase (383 aa).

Zn(2+) is bound at residue H80. D82 is an active-site residue. D112 lines the Zn(2+) pocket. Residue E144 is part of the active site. The Zn(2+) site is built by E145, E169, and H355.

The protein belongs to the peptidase M20A family. ArgE subfamily. In terms of assembly, homodimer. It depends on Zn(2+) as a cofactor. The cofactor is Co(2+). Glutathione is required as a cofactor.

It is found in the cytoplasm. The catalysed reaction is N(2)-acetyl-L-ornithine + H2O = L-ornithine + acetate. Its pathway is amino-acid biosynthesis; L-arginine biosynthesis; L-ornithine from N(2)-acetyl-L-ornithine (linear): step 1/1. In terms of biological role, catalyzes the hydrolysis of the amide bond of N(2)-acetylated L-amino acids. Cleaves the acetyl group from N-acetyl-L-ornithine to form L-ornithine, an intermediate in L-arginine biosynthesis pathway, and a branchpoint in the synthesis of polyamines. The chain is Acetylornithine deacetylase from Salmonella agona (strain SL483).